The sequence spans 836 residues: Protein-glutamine gamma-glutamyltransferase K (836 aa).

A compositionally biased stretch (basic and acidic residues) spans 1–33 (MDGPRSDMGRSDVSRSDMSRSDMGRSDMGRSDV). Disordered stretches follow at residues 1-68 (MDGP…SRGG) and 89-125 (DDWG…DGTI). At T46 the chain carries Phosphothreonine. Phosphoserine is present on residues S48, S98, and S112. Positions 89–112 (DDWGREPSDSRDRGSSSRGGRPDS) are enriched in basic and acidic residues. Residues C397, H456, and D479 contribute to the active site. Ca(2+) is bound by residues N519, D521, E568, and E573. Position 824 is a phosphoserine (S824).

Belongs to the transglutaminase superfamily. Transglutaminase family. In terms of assembly, interacts with PLAAT4. Ca(2+) serves as cofactor. Palmitoylated. In terms of processing, the membrane anchorage region possesses a cluster of five cysteines within which fatty acid(s) may become thioester-linked. It is subject to phorbol ester-stimulated phosphorylation and is hypersensitive to proteolysis, which releases the enzyme in a soluble form. Post-translationally, tyrosine-phosphorylated.

Its subcellular location is the membrane. It catalyses the reaction L-glutaminyl-[protein] + L-lysyl-[protein] = [protein]-L-lysyl-N(6)-5-L-glutamyl-[protein] + NH4(+). Inhibited by retinoic acid, but phorbol ester treatment activates it. Its function is as follows. Catalyzes the cross-linking of proteins and the conjugation of polyamines to proteins. Responsible for cross-linking epidermal proteins during formation of the stratum corneum. Involved in cell proliferation. The sequence is that of Protein-glutamine gamma-glutamyltransferase K (TGM1) from Oryctolagus cuniculus (Rabbit).